The sequence spans 396 residues: MVLESTMICFDNSDFQRNGDYFPTRLIVQRDGINLVCLTKLRSNPENNVGLMTLSNTVEVLATLTSDAGRIFSKMHLVQPKGEINLLTGIRIAHLVLKHRQGKNHKMRIVVFVGSPINHEEGDLVKQAKRLKKEKVNVDIVSFGDHGNNNEILTAFINALNGKDGTGSHLVSVPRGSVLSDALLSSPIIQGEDGMGGAGLGGNVFEFGVDPNEDPELALALRVSMEEQRQRQESEQRRANPDGAPPTGGDAGGGGGVSGSGPGNEESAGAENEANTEEAMLQRALALSTETPEDNLPDFANMTEEEQIAFAMQMSMQDAPDDSVTQQAKRPKTDEANAPMDVDEDYSEVIGDPAFLQSVLENLPGVDPQSEAVRDAVGSLNKDKDKKSDGKDSQKK.

The region spanning 1–188 (MVLESTMICF…LSDALLSSPI (188 aa)) is the VWFA domain. A UIM 1 domain is found at 212–231 (NEDPELALALRVSMEEQRQR). Residues 225–240 (MEEQRQRQESEQRRAN) show a composition bias toward basic and acidic residues. 3 disordered regions span residues 225 to 278 (MEEQ…NTEE), 311 to 341 (AMQM…APMD), and 360 to 396 (LENL…SQKK). Residues 249–262 (GDAGGGGGVSGSGP) show a composition bias toward gly residues. The span at 263-278 (GNEESAGAENEANTEE) shows a compositional bias: low complexity. UIM domains lie at 276–295 (TEEA…PEDN) and 303–322 (TEEE…APDD). The segment covering 381–396 (NKDKDKKSDGKDSQKK) has biased composition (basic and acidic residues).

The protein belongs to the proteasome subunit S5A family. The 26S proteasome is composed of a core protease, known as the 20S proteasome, capped at one or both ends by the 19S regulatory complex (RC). The RC is composed of at least 18 different subunits in two subcomplexes, the base and the lid, which form the portions proximal and distal to the 20S proteolytic core, respectively. Interacts with Ubc4.

Binds and presumably selects ubiquitin-conjugates for destruction. This Drosophila melanogaster (Fruit fly) protein is 26S proteasome non-ATPase regulatory subunit 4 (Rpn10).